The primary structure comprises 662 residues: Glycogen debranching enzyme (662 aa).

Asp338 (nucleophile) is an active-site residue. Glu373 functions as the Proton donor in the catalytic mechanism.

This sequence belongs to the glycosyl hydrolase 13 family.

It catalyses the reaction Hydrolysis of (1-&gt;6)-alpha-D-glucosidic linkages to branches with degrees of polymerization of three or four glucose residues in limit dextrin.. It functions in the pathway glycan degradation; glycogen degradation. Its function is as follows. Removes maltotriose and maltotetraose chains that are attached by 1,6-alpha-linkage to the limit dextrin main chain, generating a debranched limit dextrin. This chain is Glycogen debranching enzyme, found in Yersinia pseudotuberculosis serotype I (strain IP32953).